A 165-amino-acid chain; its full sequence is Transcription antitermination protein NusB (165 aa).

Belongs to the NusB family.

Its function is as follows. Involved in transcription antitermination. Required for transcription of ribosomal RNA (rRNA) genes. Binds specifically to the boxA antiterminator sequence of the ribosomal RNA (rrn) operons. This is Transcription antitermination protein NusB from Rhodococcus erythropolis (strain PR4 / NBRC 100887).